The primary structure comprises 317 residues: MNNWNSITIKISREAEEAISALLIEAGSAGVEINDSADYLNHEDQFGEVLPEIEQSELVDITAYYPENMPIVELKAEIEHKIANLADYFSLTGLSVTTNNLSETNWAEAWKKYFEPARITHDLTIVPSWTKDYLATGSEKLIRLDPGMAFGTGTHPTTKMSLYALEQVLRGGETLLDVGTGSGVLSVAATYLGAAEIFAYDIDEVAVRVALENIELNPGHEKIHVSANNLLEGIDKKADVIVANILADILVLMTDDAFRLVKEEGYLIMSGIIADKADMVIASAENAGFFLETRLIQGEWNCLIFKKTENREGVIGG.

Residues threonine 158, glycine 179, aspartate 201, and asparagine 244 each coordinate S-adenosyl-L-methionine.

This sequence belongs to the methyltransferase superfamily. PrmA family.

It is found in the cytoplasm. It catalyses the reaction L-lysyl-[protein] + 3 S-adenosyl-L-methionine = N(6),N(6),N(6)-trimethyl-L-lysyl-[protein] + 3 S-adenosyl-L-homocysteine + 3 H(+). Functionally, methylates ribosomal protein L11. The sequence is that of Ribosomal protein L11 methyltransferase from Lactococcus lactis subsp. cremoris (strain SK11).